The primary structure comprises 504 residues: Anaerobic nitric oxide reductase transcription regulator NorR (504 aa).

The residue at position 57 (Asp-57) is a 4-aspartylphosphate. Residues 187 to 416 (MIGLSPGMTQ…LEHAIHRAVV (230 aa)) enclose the Sigma-54 factor interaction domain. Residues 215–222 (GETGTGKE) and 278–287 (ADNGTLFLDE) each bind ATP. The H-T-H motif DNA-binding region spans 479-498 (WAACARMLETDVANLHRLAK).

Its pathway is nitrogen metabolism; nitric oxide reduction. Required for the expression of anaerobic nitric oxide (NO) reductase, acts as a transcriptional activator for at least the norVW operon. Activation also requires sigma-54. In Escherichia coli O81 (strain ED1a), this protein is Anaerobic nitric oxide reductase transcription regulator NorR.